Consider the following 749-residue polypeptide: Photosystem I P700 chlorophyll a apoprotein A1 (749 aa).

A run of 8 helical transmembrane segments spans residues 70–93 (VFSA…FHGA), 156–179 (LYAT…FHYH), 195–219 (LNHH…HVSL), 291–309 (TAHH…GHMY), 346–369 (WHAQ…HHMY), 385–411 (LSLF…IFLV), 433–455 (AIIS…LYIH), and 531–549 (FLVH…LILL). The [4Fe-4S] cluster site is built by Cys573 and Cys582. The next 2 membrane-spanning stretches (helical) occupy residues 589–610 (HVFL…HFSW) and 663–685 (LSAY…MFLF). His674 is a binding site for chlorophyll a'. Chlorophyll a-binding residues include Met682 and Tyr690. Trp691 serves as a coordination point for phylloquinone. The chain crosses the membrane as a helical span at residues 723 to 743 (AVGVAHYLLGGIATTWAFFLA).

This sequence belongs to the PsaA/PsaB family. As to quaternary structure, the PsaA/B heterodimer binds the P700 chlorophyll special pair and subsequent electron acceptors. PSI consists of a core antenna complex that captures photons, and an electron transfer chain that converts photonic excitation into a charge separation. The eukaryotic PSI reaction center is composed of at least 11 subunits. P700 is a chlorophyll a/chlorophyll a' dimer, A0 is one or more chlorophyll a, A1 is one or both phylloquinones and FX is a shared 4Fe-4S iron-sulfur center. is required as a cofactor.

It is found in the plastid. Its subcellular location is the chloroplast thylakoid membrane. It carries out the reaction reduced [plastocyanin] + hnu + oxidized [2Fe-2S]-[ferredoxin] = oxidized [plastocyanin] + reduced [2Fe-2S]-[ferredoxin]. PsaA and PsaB bind P700, the primary electron donor of photosystem I (PSI), as well as the electron acceptors A0, A1 and FX. PSI is a plastocyanin-ferredoxin oxidoreductase, converting photonic excitation into a charge separation, which transfers an electron from the donor P700 chlorophyll pair to the spectroscopically characterized acceptors A0, A1, FX, FA and FB in turn. Oxidized P700 is reduced on the lumenal side of the thylakoid membrane by plastocyanin. The sequence is that of Photosystem I P700 chlorophyll a apoprotein A1 from Zygnema circumcarinatum (Green alga).